The following is a 319-amino-acid chain: MTSMENITEVTEFILLGLTDDPNLQVPLLLIFLFIYLVTLIGNGGMMVIIFSDSHLHTPMYFFLSNLSFVDLGYSSAVAPKMVAALQSGNKVISYNGCAAQFFFFVGFATVECYLLASMAYDRHAAVCRPLHYTTTMTTGVCTILTIGSYTCGFLNASIHAADTFKLSFCGSNKINHFFCDIPPLLALACSSTHISKLVVFFVVGFNVFFTLLVIIISYFFIYIAIQNMKSSEGRKKAFSTCASHLTAVSIFYGTIIFMYLQPSSGQSMDTDKIASVFYTVVIPMLNPLIYSLRNREVKSALWKILNRFYPASFSVSRK.

Over 1–26 the chain is Extracellular; sequence MTSMENITEVTEFILLGLTDDPNLQV. N6 is a glycosylation site (N-linked (GlcNAc...) asparagine). The helical transmembrane segment at 27-47 threads the bilayer; the sequence is PLLLIFLFIYLVTLIGNGGMM. Residues 48–55 lie on the Cytoplasmic side of the membrane; sequence VIIFSDSH. Residues 56-76 traverse the membrane as a helical segment; it reads LHTPMYFFLSNLSFVDLGYSS. The Extracellular segment spans residues 77–100; the sequence is AVAPKMVAALQSGNKVISYNGCAA. C98 and C190 form a disulfide bridge. A helical membrane pass occupies residues 101-121; it reads QFFFFVGFATVECYLLASMAY. Residues 122–134 lie on the Cytoplasmic side of the membrane; that stretch reads DRHAAVCRPLHYT. A helical transmembrane segment spans residues 135 to 155; it reads TTMTTGVCTILTIGSYTCGFL. The Extracellular portion of the chain corresponds to 156–197; that stretch reads NASIHAADTFKLSFCGSNKINHFFCDIPPLLALACSSTHISK. Residues 198-218 form a helical membrane-spanning segment; it reads LVVFFVVGFNVFFTLLVIIIS. Residues 219-238 are Cytoplasmic-facing; it reads YFFIYIAIQNMKSSEGRKKA. Residues 239 to 259 form a helical membrane-spanning segment; sequence FSTCASHLTAVSIFYGTIIFM. The Extracellular portion of the chain corresponds to 260–272; the sequence is YLQPSSGQSMDTD. A helical membrane pass occupies residues 273-293; the sequence is KIASVFYTVVIPMLNPLIYSL. Residues 294 to 319 are Cytoplasmic-facing; it reads RNREVKSALWKILNRFYPASFSVSRK.

This sequence belongs to the G-protein coupled receptor 1 family.

It is found in the cell membrane. Its function is as follows. Odorant receptor. This chain is Olfactory receptor 5B21, found in Mus musculus (Mouse).